The primary structure comprises 161 residues: Chorion class B protein L12 (161 aa).

The signal sequence occupies residues 1 to 21 (MAAKLILFVCATALVAQSVLS). Residues 22 to 52 (IGCGCGGRGYGGLGYGGLGYGGLGGGCGRGF) form a left arm region. 3 repeat units span residues 30–34 (GYGGL), 35–39 (GYGGL), and 40–44 (GYGGL). The segment at 30-44 (GYGGLGYGGLGYGGL) is 3 X 5 AA tandem repeats of G-Y-G-G-L. Positions 53–121 (SGGGLPVATA…GNGAVGITRE (69 aa)) are central domain. The right arm (Gly-rich tandem repeats) stretch occupies residues 122–161 (GGFGYGAGYGDGYGLGFGGYGGGYGLGNGGYGGCGCGWGY).

It belongs to the chorion protein family.

This protein is one of many from the eggshell of the silk moth. This chain is Chorion class B protein L12, found in Bombyx mori (Silk moth).